Here is a 241-residue protein sequence, read N- to C-terminus: Methylthioribulose-1-phosphate dehydratase (241 aa).

The tract at residues 1–20 is disordered; it reads MSAIKDERNNDHLVQSHDPE. Cys-100 serves as a coordination point for substrate. Residues His-117 and His-119 each contribute to the Zn(2+) site. Glu-146 acts as the Proton donor/acceptor in catalysis. His-202 provides a ligand contact to Zn(2+).

This sequence belongs to the aldolase class II family. MtnB subfamily. Requires Zn(2+) as cofactor.

The protein resides in the cytoplasm. It carries out the reaction 5-(methylsulfanyl)-D-ribulose 1-phosphate = 5-methylsulfanyl-2,3-dioxopentyl phosphate + H2O. It participates in amino-acid biosynthesis; L-methionine biosynthesis via salvage pathway; L-methionine from S-methyl-5-thio-alpha-D-ribose 1-phosphate: step 2/6. In terms of biological role, catalyzes the dehydration of methylthioribulose-1-phosphate (MTRu-1-P) into 2,3-diketo-5-methylthiopentyl-1-phosphate (DK-MTP-1-P). In Blastomyces gilchristii (strain SLH14081) (Blastomyces dermatitidis), this protein is Methylthioribulose-1-phosphate dehydratase.